A 248-amino-acid polypeptide reads, in one-letter code: Triosephosphate isomerase (248 aa).

9 to 11 (NWK) contributes to the substrate binding site. Catalysis depends on histidine 94, which acts as the Electrophile. Glutamate 166 acts as the Proton acceptor in catalysis. Residues glycine 172, serine 212, and 233 to 234 (GG) contribute to the substrate site.

Belongs to the triosephosphate isomerase family. Homodimer.

Its subcellular location is the cytoplasm. It carries out the reaction D-glyceraldehyde 3-phosphate = dihydroxyacetone phosphate. Its pathway is carbohydrate biosynthesis; gluconeogenesis. It functions in the pathway carbohydrate degradation; glycolysis; D-glyceraldehyde 3-phosphate from glycerone phosphate: step 1/1. Involved in the gluconeogenesis. Catalyzes stereospecifically the conversion of dihydroxyacetone phosphate (DHAP) to D-glyceraldehyde-3-phosphate (G3P). The protein is Triosephosphate isomerase of Clostridium botulinum (strain ATCC 19397 / Type A).